A 204-amino-acid chain; its full sequence is Small ribosomal subunit protein uS7 (204 aa).

Met-1 carries the N-acetylmethionine modification. Thr-2 bears the N-acetylthreonine; in 40S ribosomal protein S5, N-terminally processed mark. Thr-14 is modified (phosphothreonine). An N6-acetyllysine; alternate modification is found at Lys-47. Residue Lys-47 forms a Glycyl lysine isopeptide (Lys-Gly) (interchain with G-Cter in SUMO2); alternate linkage. Position 142 is a phosphoserine (Ser-142).

The protein belongs to the universal ribosomal protein uS7 family. Component of the small ribosomal subunit. Part of the small subunit (SSU) processome, composed of more than 70 proteins and the RNA chaperone small nucleolar RNA (snoRNA) U3.

It is found in the cytoplasm. It localises to the nucleus. The protein localises to the nucleolus. In terms of biological role, component of the small ribosomal subunit. The ribosome is a large ribonucleoprotein complex responsible for the synthesis of proteins in the cell. Part of the small subunit (SSU) processome, first precursor of the small eukaryotic ribosomal subunit. During the assembly of the SSU processome in the nucleolus, many ribosome biogenesis factors, an RNA chaperone and ribosomal proteins associate with the nascent pre-rRNA and work in concert to generate RNA folding, modifications, rearrangements and cleavage as well as targeted degradation of pre-ribosomal RNA by the RNA exosome. The chain is Small ribosomal subunit protein uS7 (RPS5) from Bos taurus (Bovine).